The primary structure comprises 164 residues: Leucine-rich single-pass membrane protein 2 (164 aa).

A helical transmembrane segment spans residues 97 to 117 (GFLLLLALLVLTCLVLALLAV).

The protein localises to the membrane. In Homo sapiens (Human), this protein is Leucine-rich single-pass membrane protein 2 (LSMEM2).